A 378-amino-acid chain; its full sequence is 1-acyl-sn-glycerol-3-phosphate acyltransferase delta (378 aa).

A helical transmembrane segment spans residues 11–31 (FLCHLVFCYVFIASGLIVNAI). The HXXXXD motif motif lies at 96–101 (HKFEID). 3 consecutive transmembrane segments (helical) span residues 125–145 (ELAYVPIIGWMWYFVEMIFCT), 311–331 (WLFWASLLLYPFFQFLVSMVS), and 338–358 (LASLVLIFCMASMGVRWMIGV).

Belongs to the 1-acyl-sn-glycerol-3-phosphate acyltransferase family.

It localises to the endoplasmic reticulum membrane. The catalysed reaction is a 1-acyl-sn-glycero-3-phosphate + an acyl-CoA = a 1,2-diacyl-sn-glycero-3-phosphate + CoA. It carries out the reaction (4Z,7Z,10Z,13Z,16Z,19Z)-docosahexaenoyl-CoA + 1-hexadecanoyl-sn-glycero-3-phosphate = 1-hexadecanoyl-2-(4Z,7Z,10Z,13Z,16Z,19Z-docosahexaenoyl)-sn-glycero-3-phosphate + CoA. It catalyses the reaction 1-octadecanoyl-sn-glycero-3-phosphate + (9Z,12Z)-octadecadienoyl-CoA = 1-octadecanoyl-2-(9Z,12Z-octadecadienoyl)-sn-glycero-3-phosphate + CoA. The enzyme catalyses 1-octadecanoyl-sn-glycero-3-phosphate + (4Z,7Z,10Z,13Z,16Z,19Z)-docosahexaenoyl-CoA = 1-octadecanoyl-2-(4Z,7Z,10Z,13Z,16Z,19Z-docosahexaenoyl)-sn-glycero-3-phosphate + CoA. The catalysed reaction is (4Z,7Z,10Z,13Z,16Z,19Z)-docosahexaenoyl-CoA + 1-(9Z-octadecenoyl)-sn-glycero-3-phosphate = 1-(9Z-octadecenoyl)-2-(4Z,7Z,10Z,13Z,16Z,19Z-docosahexaenoyl)-sn-glycero-3-phosphate + CoA. Its pathway is phospholipid metabolism; CDP-diacylglycerol biosynthesis; CDP-diacylglycerol from sn-glycerol 3-phosphate: step 2/3. Converts 1-acyl-sn-glycerol-3-phosphate (lysophosphatidic acid or LPA) into 1,2-diacyl-sn-glycerol-3-phosphate (phosphatidic acid or PA) by incorporating an acyl moiety at the sn-2 position of the glycerol backbone. Exhibits high acyl-CoA specificity for polyunsaturated fatty acyl-CoA, especially docosahexaenoyl-CoA (22:6-CoA, DHA-CoA). In Rattus norvegicus (Rat), this protein is 1-acyl-sn-glycerol-3-phosphate acyltransferase delta (Agpat4).